The chain runs to 698 residues: Serotransferrin (698 aa).

The first 19 residues, M1–A19, serve as a signal peptide directing secretion. Transferrin-like domains lie at V25–E347 and V361–K683. 2 disulfide bridges follow: C28–C67 and C38–C58. A Dimethylated arginine modification is found at R42. S51 carries an O-linked (GalNAc...) serine glycan. Fe(3+) is bound by residues D82 and Y114. Cystine bridges form between C137–C213, C156–C350, C177–C193, C180–C196, C190–C198, C246–C260, C358–C615, C364–C396, C374–C387, C421–C693, C437–C656, C469–C542, C493–C684, C503–C517, C514–C525, C582–C596, and C634–C639. The hydrogencarbonate site is built by T139, R143, A145, and G146. Y207 lines the Fe(3+) pocket. Residue H268 participates in Fe(3+) binding. S389 carries the phosphoserine modification. The Fe(3+) site is built by D411 and Y445. Hydrogencarbonate is bound by residues T471, R475, A477, and G478. Y536 provides a ligand contact to Fe(3+). Position 604 (H604) interacts with Fe(3+). N-linked (GlcNAc...) asparagine glycosylation is present at N630. Position 685 is a phosphoserine (S685).

It belongs to the transferrin family. Monomer. Part of a complex composed of SLC40A1/ferroportin, TF/transferrin and HEPH/hephaestin that transfers iron from cells to transferrin. Expressed by the liver and secreted in plasma.

The protein resides in the secreted. In terms of biological role, transferrins are iron binding transport proteins which can bind two Fe(3+) ions in association with the binding of an anion, usually bicarbonate. It is responsible for the transport of iron from sites of absorption and heme degradation to those of storage and utilization. Serum transferrin may also have a further role in stimulating cell proliferation. The polypeptide is Serotransferrin (TF) (Pan troglodytes (Chimpanzee)).